Reading from the N-terminus, the 429-residue chain is Argininosuccinate lyase (429 aa).

The protein belongs to the lyase 1 family. Argininosuccinate lyase subfamily.

The protein resides in the cytoplasm. It catalyses the reaction 2-(N(omega)-L-arginino)succinate = fumarate + L-arginine. Its pathway is amino-acid biosynthesis; L-arginine biosynthesis; L-arginine from L-ornithine and carbamoyl phosphate: step 3/3. The chain is Argininosuccinate lyase from Pyrobaculum arsenaticum (strain DSM 13514 / JCM 11321 / PZ6).